The sequence spans 244 residues: Small ribosomal subunit protein uS2 (244 aa).

It belongs to the universal ribosomal protein uS2 family.

This is Small ribosomal subunit protein uS2 from Hydrogenovibrio crunogenus (strain DSM 25203 / XCL-2) (Thiomicrospira crunogena).